A 943-amino-acid chain; its full sequence is Receptor-like protein 35 (943 aa).

A signal peptide spans M1 to A31. The Extracellular segment spans residues A32–W897. 8 N-linked (GlcNAc...) asparagine glycosylation sites follow: N67, N82, N118, N147, N171, N195, N219, and N222. LRR repeat units lie at residues L124 to L148, H150 to N171, L172 to L196, H198 to L220, N222 to L244, A245 to N267, L268 to L292, T293 to S317, L319 to I340, P341 to S364, and S366 to F389. N291 and N312 each carry an N-linked (GlcNAc...) asparagine glycan. Residues N354 and N361 are each glycosylated (N-linked (GlcNAc...) asparagine). Residues V390–H414 form an LRR 12; degenerate repeat. Residue N391 is glycosylated (N-linked (GlcNAc...) asparagine). LRR repeat units lie at residues L415–Y439, F440–S463, S467–Q490, H491–L514, P515–H537, K544–L568, R569–L592, K593–S617, R619–F639, S640–K665, Q667–F685, P686–K709, L753–L777, K778–L801, T802–L825, and F827–R850. The N-linked (GlcNAc...) asparagine glycan is linked to N457. N-linked (GlcNAc...) asparagine glycans are attached at residues N521, N524, N556, N582, and N605. The N-linked (GlcNAc...) asparagine glycan is linked to N653. N699 carries N-linked (GlcNAc...) asparagine glycosylation. N-linked (GlcNAc...) asparagine glycosylation is found at N784 and N800. N-linked (GlcNAc...) asparagine glycosylation is found at N832, N852, and N882. A helical membrane pass occupies residues I898–L918. The Cytoplasmic segment spans residues V919 to H943.

The protein belongs to the RLP family.

The protein resides in the cell membrane. The chain is Receptor-like protein 35 from Arabidopsis thaliana (Mouse-ear cress).